The chain runs to 250 residues: N-acyl homoserine lactonase (250 aa).

Zn(2+) contacts are provided by His104, His106, Asp108, His109, His169, Asp191, and His235.

This sequence belongs to the metallo-beta-lactamase superfamily. In terms of assembly, monomer. Requires Zn(2+) as cofactor.

The enzyme catalyses an N-acyl-L-homoserine lactone + H2O = an N-acyl-L-homoserine + H(+). Completely inhibited by Cu(2+) and Ag(+). Partially inhibited by Cr(2+), Pb(2+) and Fe(2+). Mg(2+), Ca(2+), Mn(2+), Co(2+), Ni(2+), Zn(2+) and Cd(2+) have no effect on activity. The chelating agents EDTA, 2,2'bipyridine and o-phenanthroline have no effect on enzyme activity. In terms of biological role, hydrolyzes acyl homoserine lactones with varying lengths of acyl chains, with a slight preference for substrates without 3-oxo substitution at the C3 position. Has only residual activity towards non-acyl lactones, and no activity towards non-cyclic esters. In Bacillus sp, this protein is N-acyl homoserine lactonase.